The sequence spans 299 residues: Cycloserine biosynthesis protein DcsG (299 aa).

Residues Lys-92, Lys-137, Ser-144, Gln-175, Pro-176, and Val-178 each contribute to the ATP site. The ATP-grasp domain maps to 95–298 (LADLAAHGVP…FAQALAERLK (204 aa)). Residues Arg-220 and Arg-254 contribute to the active site. Positions 269 and 271 each coordinate Mg(2+). Residue Glu-271 is part of the active site.

In terms of assembly, monomer. It depends on Mg(2+) as a cofactor.

The catalysed reaction is O-ureido-D-serine + ATP + H2O + H(+) = D-cycloserine + NH4(+) + ADP + phosphate + CO2. Involved in the biosynthesis of the antibiotic D-cycloserine (DCS), a cyclic structural analog of D-alanine, used as an antitubercular agent. Catalyzes the synthesis of D-cycloserine from O-ureido-D-serine (D-OUS). It reacts with D-OUS, D-homocysteine and beta-aminooxy-D-alanine. This Streptomyces lavendulae protein is Cycloserine biosynthesis protein DcsG.